The sequence spans 130 residues: Large ribosomal subunit protein uL22 (130 aa).

Belongs to the universal ribosomal protein uL22 family. In terms of assembly, part of the 50S ribosomal subunit.

Its function is as follows. This protein binds specifically to 23S rRNA; its binding is stimulated by other ribosomal proteins, e.g. L4, L17, and L20. It is important during the early stages of 50S assembly. It makes multiple contacts with different domains of the 23S rRNA in the assembled 50S subunit and ribosome. The globular domain of the protein is located near the polypeptide exit tunnel on the outside of the subunit, while an extended beta-hairpin is found that lines the wall of the exit tunnel in the center of the 70S ribosome. This Clavibacter michiganensis subsp. michiganensis (strain NCPPB 382) protein is Large ribosomal subunit protein uL22.